We begin with the raw amino-acid sequence, 176 residues long: Glutathione-regulated potassium-efflux system ancillary protein KefF (176 aa).

Residues histidine 8, 14-17, 65-68, and 105-108 each bind FMN; these read SHAN, MQWY, and TTGG.

Belongs to the NAD(P)H dehydrogenase (quinone) family. KefF subfamily. In terms of assembly, homodimer. Interacts with KefC. FMN is required as a cofactor.

Its subcellular location is the cell inner membrane. It carries out the reaction a quinone + NADH + H(+) = a quinol + NAD(+). It catalyses the reaction a quinone + NADPH + H(+) = a quinol + NADP(+). Its function is as follows. Regulatory subunit of a potassium efflux system that confers protection against electrophiles. Required for full activity of KefC. Shows redox enzymatic activity, but this enzymatic activity is not required for activation of KefC. This Salmonella gallinarum (strain 287/91 / NCTC 13346) protein is Glutathione-regulated potassium-efflux system ancillary protein KefF.